Here is a 591-residue protein sequence, read N- to C-terminus: Aspartate--tRNA(Asp/Asn) ligase (591 aa).

Glu175 serves as a coordination point for L-aspartate. An aspartate region spans residues 199–202 (QQFK). Residues Arg221 and His453 each contribute to the L-aspartate site. 221–223 (RDE) contacts ATP. Glu486 lines the ATP pocket. Arg493 is an L-aspartate binding site. ATP is bound at residue 538–541 (GIDR).

It belongs to the class-II aminoacyl-tRNA synthetase family. Type 1 subfamily. As to quaternary structure, homodimer.

Its subcellular location is the cytoplasm. It catalyses the reaction tRNA(Asx) + L-aspartate + ATP = L-aspartyl-tRNA(Asx) + AMP + diphosphate. Aspartyl-tRNA synthetase with relaxed tRNA specificity since it is able to aspartylate not only its cognate tRNA(Asp) but also tRNA(Asn). Reaction proceeds in two steps: L-aspartate is first activated by ATP to form Asp-AMP and then transferred to the acceptor end of tRNA(Asp/Asn). The polypeptide is Aspartate--tRNA(Asp/Asn) ligase (Cereibacter sphaeroides (strain ATCC 17025 / ATH 2.4.3) (Rhodobacter sphaeroides)).